Consider the following 271-residue polypeptide: Shikimate dehydrogenase-like protein HI_0607 (271 aa).

The Proton donor/acceptor role is filled by Lys-67. Position 103 (Asp-103) interacts with substrate. Residues 126–130, Lys-154, and Ser-184 contribute to the NADP(+) site; that span reads GSGGM.

This sequence belongs to the shikimate dehydrogenase-like family. As to quaternary structure, homodimer.

The enzyme catalyses shikimate + NADP(+) = 3-dehydroshikimate + NADPH + H(+). Its function is as follows. In vitro, is able to catalyze the NADP(+)-dependent oxidation of shikimate to 3-dehydroshikimate. However, has much lower activity than classical shikimate dehydrogenases AroE, indicating that shikimate may not be the biological substrate. Cannot utilize NAD(+) instead of NADP(+). Is not able to catalyze the oxidation of quinate. This chain is Shikimate dehydrogenase-like protein HI_0607, found in Haemophilus influenzae (strain ATCC 51907 / DSM 11121 / KW20 / Rd).